Here is a 193-residue protein sequence, read N- to C-terminus: Putative zinc finger protein 726P1 (193 aa).

The segment at 18 to 40 (YKCKKCGKTFNWSSILTNNKKIH) adopts a C2H2-type 1; degenerate zinc-finger fold. The C2H2-type 2; atypical zinc finger occupies 46-68 (YKCEECGKAFKQHSTLTTHKIIC). The C2H2-type 3; degenerate zinc-finger motif lies at 74–96 (YRCEECGKAFCQPSTLTRYKRMH). The C2H2-type 4 zinc finger occupies 102–124 (YKCEECGKAFTQFSTLTKHKRIH). Residues 130–152 (YKCEESGKAFIWSSGLTEHRRVH) form a C2H2-type 5; degenerate zinc finger. The C2H2-type 6 zinc-finger motif lies at 158 to 180 (YKCEECGKALIQFSTLTRHKRIH).

The polypeptide is Putative zinc finger protein 726P1 (ZNF726P1) (Homo sapiens (Human)).